The primary structure comprises 1653 residues: Cortactin-binding protein 2 (1653 aa).

Disordered stretches follow at residues Met1 to Ala27, Lys203 to Glu222, Gln268 to Thr297, Glu314 to Val339, and His356 to Asp609. Positions Arg119 to Lys276 form a coiled coil. Polar residues predominate over residues Gly379 to Thr389. Over residues Ser390 to Gly408 the composition is skewed to low complexity. 3 stretches are compositionally biased toward polar residues: residues Gly444–Asp470, Ala478–Thr490, and Thr573–Gln584. Residue Arg488 is modified to Asymmetric dimethylarginine. ANK repeat units lie at residues Gly700–Tyr730, Asp734–Ala763, Asn767–His796, Gly800–Val829, and Asp833–Gly862. Residues Ala860–Val892 are disordered. Over residues Asn866–Ser883 the composition is skewed to acidic residues. One copy of the ANK 6 repeat lies at Glu903–Arg933. Positions Glu1441–Glu1472 are disordered. Ser1514 carries the phosphoserine modification. Positions Asp1545–Lys1653 are disordered. Polar residues-rich tracts occupy residues Phe1549 to Asn1564 and Lys1572 to Lys1589. Low complexity predominate over residues Ser1614–Gln1628. The segment covering Ser1635 to Lys1653 has biased composition (basic and acidic residues).

Interacts with CTTN/cortactin SH3 domain. Interacts with STRN, STRN4/zinedin and MOB4/phocein; this interactions mediate the association with the STRIPAK core complex and may regulate dendritic spine distribution of the STRIPAK complex in hippocampal neurons. Activation of glutamate receptors weakens the interaction with STRN and STRN4.

The protein resides in the cytoplasm. It is found in the cell cortex. It localises to the cell projection. The protein localises to the dendritic spine. Regulates the dendritic spine distribution of CTTN/cortactin in hippocampal neurons, and thus controls dendritic spinogenesis and dendritic spine maintenance. Associates with the striatin-interacting phosphatase and kinase (STRIPAK) core complex to regulate dendritic spine distribution of the STRIPAK complex in hippocampal neurons. This Eulemur macaco macaco (Black lemur) protein is Cortactin-binding protein 2 (CTTNBP2).